The following is a 94-amino-acid chain: uncharacterized protein (94 aa).

This sequence belongs to the phD/YefM antitoxin family.

This is an uncharacterized protein from Synechocystis sp. (strain ATCC 27184 / PCC 6803 / Kazusa).